We begin with the raw amino-acid sequence, 331 residues long: UPF0194 membrane protein YbhG (331 aa).

A signal peptide spans 1-15 (MKKPVVIGLAVVVLA). A coiled-coil region spans residues 107-208 (EEIAQAAAAV…LNLQDSTLIA (102 aa)).

Belongs to the UPF0194 family.

It localises to the periplasm. This Escherichia coli O139:H28 (strain E24377A / ETEC) protein is UPF0194 membrane protein YbhG.